We begin with the raw amino-acid sequence, 413 residues long: Palmitoyltransferase ZDHHC6 (413 aa).

At 1-24 (MGTFCSVVKFENLQELKRLCHWGP) the chain is on the cytoplasmic side. A helical membrane pass occupies residues 25 to 45 (IIALGVIAICSAMAMIDSVLW). Residues 46-57 (YWPLHTTGGSVN) are Lumenal-facing. A helical membrane pass occupies residues 58–78 (FIMLINWTVMILYNYFNAMFV). Topologically, residues 79–143 (GPGFVPLGWK…NCCGYQNHAS (65 aa)) are cytoplasmic. The DHHC domain maps to 99–149 (QYCKVCQAYKAPRSHHCRKCNRCVMKMDHHCPWINNCCGYQNHASFTLFLL). The active-site S-palmitoyl cysteine intermediate is C129. Residues 144–164 (FTLFLLLAPLGCIHAAFIFVM) traverse the membrane as a helical segment. At 165 to 194 (TMYTQLYNRLSFGWNTVKIDMSAARRDPLP) the chain is on the lumenal side. The helical transmembrane segment at 195–215 (IIPFGLAAFAATLFALGLALG) threads the bilayer. The Cytoplasmic portion of the chain corresponds to 216 to 413 (TTIAVGMLFF…QAPEGEKKNR (198 aa)). Positions 313 to 398 (VRSVRYKVIE…PRNCVEKCPC (86 aa)) constitute an SH3 domain. 3 S-palmitoyl cysteine lipidation sites follow: C328, C329, and C343. Residues 410–413 (KKNR) carry the Di-lysine motif motif.

It belongs to the DHHC palmitoyltransferase family. In terms of assembly, homooligomerizes. Interacts with SELENOK. In terms of processing, palmitoylated at 3 different sites by ZDHHC16. The combination of the different palmitoylation events strongly affects the quaternary assembly of ZDHHC6, its localization, stability and function. Palmitoylation at Cys-328 accelerates the turnover of ZDHHC6. Depalmitoylated by LYPLA2.

It is found in the endoplasmic reticulum membrane. It carries out the reaction L-cysteinyl-[protein] + hexadecanoyl-CoA = S-hexadecanoyl-L-cysteinyl-[protein] + CoA. The enzyme catalyses L-cysteinyl-[protein] + octadecanoyl-CoA = S-octadecanoyl-L-cysteinyl-[protein] + CoA. Its function is as follows. Endoplasmic reticulum palmitoyl acyltransferase that mediates palmitoylation of proteins such as AMFR, CALX, ITPR1 and TFRC. Palmitoylates calnexin (CALX), which is required for its association with the ribosome-translocon complex and efficient folding of glycosylated proteins. Mediates palmitoylation of AMFR, promoting AMFR distribution to the peripheral endoplasmic reticulum. Together with SELENOK, palmitoylates ITPR1 in immune cells, leading to regulate ITPR1 stability and function. Stearoyltransferase that mediates stearoylation of TFRC to inhibit TFRC-mediated activation of the JNK pathway and mitochondrial fragmentation. The sequence is that of Palmitoyltransferase ZDHHC6 from Bos taurus (Bovine).